Consider the following 217-residue polypeptide: Pyridoxine/pyridoxamine 5'-phosphate oxidase (217 aa).

Residues 14 to 17 (RKSY) and Lys72 each bind substrate. FMN contacts are provided by residues 67 to 72 (RVVLIK), 82 to 83 (YT), Arg88, and Lys89. Positions 129, 133, and 137 each coordinate substrate. Residues 146-147 (QS) and Trp190 each bind FMN. 196 to 198 (RLH) contributes to the substrate binding site. An FMN-binding site is contributed by Arg200.

The protein belongs to the pyridoxamine 5'-phosphate oxidase family. Homodimer. Requires FMN as cofactor.

It carries out the reaction pyridoxamine 5'-phosphate + O2 + H2O = pyridoxal 5'-phosphate + H2O2 + NH4(+). The enzyme catalyses pyridoxine 5'-phosphate + O2 = pyridoxal 5'-phosphate + H2O2. It functions in the pathway cofactor metabolism; pyridoxal 5'-phosphate salvage; pyridoxal 5'-phosphate from pyridoxamine 5'-phosphate: step 1/1. It participates in cofactor metabolism; pyridoxal 5'-phosphate salvage; pyridoxal 5'-phosphate from pyridoxine 5'-phosphate: step 1/1. In terms of biological role, catalyzes the oxidation of either pyridoxine 5'-phosphate (PNP) or pyridoxamine 5'-phosphate (PMP) into pyridoxal 5'-phosphate (PLP). The chain is Pyridoxine/pyridoxamine 5'-phosphate oxidase from Acidovorax sp. (strain JS42).